Reading from the N-terminus, the 685-residue chain is ABC transporter G family member 26 (685 aa).

The ABC transporter domain occupies Leu-65 to Ile-329. Gly-124–Thr-131 contacts ATP. In terms of domain architecture, ABC transmembrane type-2 spans Asp-414–Tyr-623. A run of 6 helical transmembrane segments spans residues Phe-432–Trp-452, Leu-468–Phe-488, Met-518–Phe-538, Ile-542–Ala-562, Ala-576–Gln-596, and Thr-648–Tyr-668.

Belongs to the ABC transporter superfamily. ABCG family. Eye pigment precursor importer (TC 3.A.1.204) subfamily. In terms of assembly, homo- or heterodimer. In terms of tissue distribution, mostly expressed in flowers, especially in tapetum within anthers.

It is found in the cell membrane. The protein localises to the endoplasmic reticulum membrane. In terms of biological role, mediates the transport of sporopollenin precursors (e.g. polyketides) across the tapetum plasma membrane into the anther locule for polymerization on developing microspore walls, thus being required for male fertility and pollen exine formation and patterning prior to tapetum programmed cell death. This Arabidopsis thaliana (Mouse-ear cress) protein is ABC transporter G family member 26.